The following is a 229-amino-acid chain: Peroxiredoxin-like 2A (229 aa).

Residues 14-112 (MWSIGVGAFG…DELGVPLYAV (99 aa)) form a thioredoxin fold region. Catalysis depends on redox-active residues C85 and C88.

This sequence belongs to the peroxiredoxin-like PRXL2 family. PRXL2A subfamily. As to expression, expressed by the principal cells of the epididymis. Detected in the head region of epididymal sperm (at protein level). Expressed in bone marrow.

The protein resides in the cytoplasm. The protein localises to the secreted. Involved in redox regulation of the cell. Acts as an antioxidant. Inhibits TNFSF11-induced NFKB1 and JUN activation and osteoclast differentiation. May affect bone resorption and help to maintain bone mass. Acts as a negative regulator of macrophage-mediated inflammation by inhibiting macrophage production of inflammatory cytokines, probably through suppression of the MAPK signaling pathway. This Rattus norvegicus (Rat) protein is Peroxiredoxin-like 2A.